The following is a 361-amino-acid chain: Protein RecA (361 aa).

77 to 84 (GPESSGKT) serves as a coordination point for ATP.

This sequence belongs to the RecA family.

Its subcellular location is the cytoplasm. Can catalyze the hydrolysis of ATP in the presence of single-stranded DNA, the ATP-dependent uptake of single-stranded DNA by duplex DNA, and the ATP-dependent hybridization of homologous single-stranded DNAs. It interacts with LexA causing its activation and leading to its autocatalytic cleavage. In Brucella anthropi (strain ATCC 49188 / DSM 6882 / CCUG 24695 / JCM 21032 / LMG 3331 / NBRC 15819 / NCTC 12168 / Alc 37) (Ochrobactrum anthropi), this protein is Protein RecA.